The chain runs to 139 residues: Small ribosomal subunit protein bS16 (139 aa).

Positions 85-108 (ESKSGKKPAKKATTKEASAKKPTD) are disordered. A compositionally biased stretch (basic and acidic residues) spans 97–108 (TTKEASAKKPTD).

The protein belongs to the bacterial ribosomal protein bS16 family.

This Leuconostoc mesenteroides subsp. mesenteroides (strain ATCC 8293 / DSM 20343 / BCRC 11652 / CCM 1803 / JCM 6124 / NCDO 523 / NBRC 100496 / NCIMB 8023 / NCTC 12954 / NRRL B-1118 / 37Y) protein is Small ribosomal subunit protein bS16.